Consider the following 175-residue polypeptide: CEN-like protein 4 (175 aa).

The protein belongs to the phosphatidylethanolamine-binding protein family. In terms of tissue distribution, expressed in vegetative axillary meristems but not in the main shoot meristem.

The protein resides in the cytoplasm. May form complexes with phosphorylated ligands by interfering with kinases and their effectors. This is CEN-like protein 4 (CET4) from Nicotiana tabacum (Common tobacco).